The primary structure comprises 601 residues: Elongation factor 4 (601 aa).

The region spanning 7-189 (SHIRNFSIIA…SIVQLVPPPQ (183 aa)) is the tr-type G domain. GTP contacts are provided by residues 19-24 (DHGKST) and 136-139 (NKID).

This sequence belongs to the TRAFAC class translation factor GTPase superfamily. Classic translation factor GTPase family. LepA subfamily.

It is found in the cell inner membrane. It carries out the reaction GTP + H2O = GDP + phosphate + H(+). Functionally, required for accurate and efficient protein synthesis under certain stress conditions. May act as a fidelity factor of the translation reaction, by catalyzing a one-codon backward translocation of tRNAs on improperly translocated ribosomes. Back-translocation proceeds from a post-translocation (POST) complex to a pre-translocation (PRE) complex, thus giving elongation factor G a second chance to translocate the tRNAs correctly. Binds to ribosomes in a GTP-dependent manner. This chain is Elongation factor 4, found in Trichodesmium erythraeum (strain IMS101).